The chain runs to 236 residues: MKLINSPKLKIIAIVPAAGIGRRMKLDFPKQYIKIKDCTILEYTLKTLLSHPNIVRIVVSLHQEDNFFQKLSISSDLRVFSVLGGNERIHSVLSGLIITTDAKWVIIHDAVRPCLSYQDLENLIAITKNTKVGGILARPVCDTIKYSNRKNKTILHTIPRNQLWHALTPQLFPINLLRFCLKKIVEDKINITDEASALEYCGYHPLIVLGSYKNIKITYPEDLIFAEFYLKELLKN.

This sequence belongs to the IspD/TarI cytidylyltransferase family. IspD subfamily. In terms of assembly, homodimer.

It catalyses the reaction 2-C-methyl-D-erythritol 4-phosphate + CTP + H(+) = 4-CDP-2-C-methyl-D-erythritol + diphosphate. The protein operates within isoprenoid biosynthesis; isopentenyl diphosphate biosynthesis via DXP pathway; isopentenyl diphosphate from 1-deoxy-D-xylulose 5-phosphate: step 2/6. Its function is as follows. Catalyzes the formation of 4-diphosphocytidyl-2-C-methyl-D-erythritol from CTP and 2-C-methyl-D-erythritol 4-phosphate (MEP). This is 2-C-methyl-D-erythritol 4-phosphate cytidylyltransferase from Buchnera aphidicola subsp. Schizaphis graminum (strain Sg).